We begin with the raw amino-acid sequence, 734 residues long: Photosystem I P700 chlorophyll a apoprotein A2 (734 aa).

A run of 8 helical transmembrane segments spans residues 46 to 69 (IFAS…FHVA), 135 to 158 (LYTG…LHLQ), 175 to 199 (LNHH…HVAI), 273 to 291 (IAHH…GHMY), 330 to 353 (LHFQ…QHMY), 369 to 395 (AALY…IFFI), 417 to 439 (AIIS…LYVH), and 517 to 535 (FLVH…LILV). Positions 559 and 568 each coordinate [4Fe-4S] cluster. The next 2 membrane-spanning stretches (helical) occupy residues 575–596 (AFYL…YWHW) and 643–665 (LSVW…MFLI). Chlorophyll a is bound by residues histidine 654, methionine 662, and tyrosine 670. Tryptophan 671 is a phylloquinone binding site. A helical membrane pass occupies residues 707–727 (LVGLAHFSVGYIFTYAAFLIA).

Belongs to the PsaA/PsaB family. In terms of assembly, the PsaA/B heterodimer binds the P700 chlorophyll special pair and subsequent electron acceptors. PSI consists of a core antenna complex that captures photons, and an electron transfer chain that converts photonic excitation into a charge separation. The eukaryotic PSI reaction center is composed of at least 11 subunits. P700 is a chlorophyll a/chlorophyll a' dimer, A0 is one or more chlorophyll a, A1 is one or both phylloquinones and FX is a shared 4Fe-4S iron-sulfur center. is required as a cofactor.

It localises to the plastid. Its subcellular location is the chloroplast thylakoid membrane. The enzyme catalyses reduced [plastocyanin] + hnu + oxidized [2Fe-2S]-[ferredoxin] = oxidized [plastocyanin] + reduced [2Fe-2S]-[ferredoxin]. In terms of biological role, psaA and PsaB bind P700, the primary electron donor of photosystem I (PSI), as well as the electron acceptors A0, A1 and FX. PSI is a plastocyanin-ferredoxin oxidoreductase, converting photonic excitation into a charge separation, which transfers an electron from the donor P700 chlorophyll pair to the spectroscopically characterized acceptors A0, A1, FX, FA and FB in turn. Oxidized P700 is reduced on the lumenal side of the thylakoid membrane by plastocyanin. The sequence is that of Photosystem I P700 chlorophyll a apoprotein A2 from Coffea arabica (Arabian coffee).